We begin with the raw amino-acid sequence, 202 residues long: Small ribosomal subunit protein uS4 (202 aa).

The tract at residues 22–43 (TRKSARRAYPPGQHGQNRKKRS) is disordered. Residues 90–152 (MRLDNTVFRL…AQSRKLVEAN (63 aa)) enclose the S4 RNA-binding domain.

It belongs to the universal ribosomal protein uS4 family. Part of the 30S ribosomal subunit. Contacts protein S5. The interaction surface between S4 and S5 is involved in control of translational fidelity.

Functionally, one of the primary rRNA binding proteins, it binds directly to 16S rRNA where it nucleates assembly of the body of the 30S subunit. In terms of biological role, with S5 and S12 plays an important role in translational accuracy. This Nostoc punctiforme (strain ATCC 29133 / PCC 73102) protein is Small ribosomal subunit protein uS4.